Reading from the N-terminus, the 281-residue chain is Nucleotide-binding protein Patl_0571 (281 aa).

8–15 serves as a coordination point for ATP; sequence GRSGSGKS. 56–59 is a GTP binding site; sequence DVRN.

The protein belongs to the RapZ-like family.

Displays ATPase and GTPase activities. In Pseudoalteromonas atlantica (strain T6c / ATCC BAA-1087), this protein is Nucleotide-binding protein Patl_0571.